The chain runs to 206 residues: LexA repressor (206 aa).

A DNA-binding region (H-T-H motif) is located at residues 28–48 (VREIGQAVGLASSSTVHGHLS). Residues Ser128 and Lys166 each act as for autocatalytic cleavage activity in the active site.

It belongs to the peptidase S24 family. Homodimer.

It carries out the reaction Hydrolysis of Ala-|-Gly bond in repressor LexA.. Its function is as follows. Represses a number of genes involved in the response to DNA damage (SOS response), including recA and lexA. In the presence of single-stranded DNA, RecA interacts with LexA causing an autocatalytic cleavage which disrupts the DNA-binding part of LexA, leading to derepression of the SOS regulon and eventually DNA repair. The protein is LexA repressor of Bacillus cytotoxicus (strain DSM 22905 / CIP 110041 / 391-98 / NVH 391-98).